A 154-amino-acid polypeptide reads, in one-letter code: Large ribosomal subunit protein uL22 (154 aa).

It belongs to the universal ribosomal protein uL22 family. Part of the 50S ribosomal subunit.

In terms of biological role, this protein binds specifically to 23S rRNA. It makes multiple contacts with different domains of the 23S rRNA in the assembled 50S subunit and ribosome. The globular domain of the protein is located near the polypeptide exit tunnel on the outside of the subunit, while an extended beta-hairpin is found that lines the wall of the exit tunnel in the center of the 70S ribosome. In Methanoregula boonei (strain DSM 21154 / JCM 14090 / 6A8), this protein is Large ribosomal subunit protein uL22.